The sequence spans 310 residues: tRNA uridine(34) hydroxylase (310 aa).

The Rhodanese domain occupies 124 to 218 (SDPEVLLIDT…YFEEVPQEES (95 aa)). Catalysis depends on cysteine 178, which acts as the Cysteine persulfide intermediate.

This sequence belongs to the TrhO family.

The enzyme catalyses uridine(34) in tRNA + AH2 + O2 = 5-hydroxyuridine(34) in tRNA + A + H2O. In terms of biological role, catalyzes oxygen-dependent 5-hydroxyuridine (ho5U) modification at position 34 in tRNAs. The protein is tRNA uridine(34) hydroxylase of Pseudomonas putida (strain ATCC 700007 / DSM 6899 / JCM 31910 / BCRC 17059 / LMG 24140 / F1).